A 395-amino-acid polypeptide reads, in one-letter code: Tryptophan synthase beta chain (395 aa).

The residue at position 86 (Lys-86) is an N6-(pyridoxal phosphate)lysine.

The protein belongs to the TrpB family. Tetramer of two alpha and two beta chains. It depends on pyridoxal 5'-phosphate as a cofactor.

The enzyme catalyses (1S,2R)-1-C-(indol-3-yl)glycerol 3-phosphate + L-serine = D-glyceraldehyde 3-phosphate + L-tryptophan + H2O. It participates in amino-acid biosynthesis; L-tryptophan biosynthesis; L-tryptophan from chorismate: step 5/5. Its function is as follows. The beta subunit is responsible for the synthesis of L-tryptophan from indole and L-serine. This is Tryptophan synthase beta chain from Pseudoalteromonas atlantica (strain T6c / ATCC BAA-1087).